Consider the following 409-residue polypeptide: NADH-quinone oxidoreductase subunit D (409 aa).

Belongs to the complex I 49 kDa subunit family. In terms of assembly, NDH-1 is composed of 14 different subunits. Subunits NuoB, C, D, E, F, and G constitute the peripheral sector of the complex.

Its subcellular location is the cell inner membrane. The enzyme catalyses a quinone + NADH + 5 H(+)(in) = a quinol + NAD(+) + 4 H(+)(out). Its function is as follows. NDH-1 shuttles electrons from NADH, via FMN and iron-sulfur (Fe-S) centers, to quinones in the respiratory chain. The immediate electron acceptor for the enzyme in this species is believed to be ubiquinone. Couples the redox reaction to proton translocation (for every two electrons transferred, four hydrogen ions are translocated across the cytoplasmic membrane), and thus conserves the redox energy in a proton gradient. The polypeptide is NADH-quinone oxidoreductase subunit D (Helicobacter hepaticus (strain ATCC 51449 / 3B1)).